A 395-amino-acid polypeptide reads, in one-letter code: Chaperone protein DnaJ (395 aa).

One can recognise a J domain in the interval 4 to 69 (DYYEVLGLSR…DKRRRYDQFG (66 aa)). A CR-type zinc finger spans residues 151 to 232 (GVEKTLKIKK…CYGEGIKQGE (82 aa)). The Zn(2+) site is built by Cys-164, Cys-167, Cys-180, Cys-183, Cys-206, Cys-209, Cys-220, and Cys-223. CXXCXGXG motif repeat units follow at residues 164 to 171 (CTECNGTG), 180 to 187 (CPTCHGSG), 206 to 213 (CPTCGGEG), and 220 to 227 (CVSCYGEG).

Belongs to the DnaJ family. Homodimer. Zn(2+) is required as a cofactor.

It localises to the cytoplasm. In terms of biological role, participates actively in the response to hyperosmotic and heat shock by preventing the aggregation of stress-denatured proteins and by disaggregating proteins, also in an autonomous, DnaK-independent fashion. Unfolded proteins bind initially to DnaJ; upon interaction with the DnaJ-bound protein, DnaK hydrolyzes its bound ATP, resulting in the formation of a stable complex. GrpE releases ADP from DnaK; ATP binding to DnaK triggers the release of the substrate protein, thus completing the reaction cycle. Several rounds of ATP-dependent interactions between DnaJ, DnaK and GrpE are required for fully efficient folding. Also involved, together with DnaK and GrpE, in the DNA replication of plasmids through activation of initiation proteins. The sequence is that of Chaperone protein DnaJ from Chlorobium phaeobacteroides (strain DSM 266 / SMG 266 / 2430).